Reading from the N-terminus, the 414-residue chain is CinA-like protein (414 aa).

The protein belongs to the CinA family.

This Akkermansia muciniphila (strain ATCC BAA-835 / DSM 22959 / JCM 33894 / BCRC 81048 / CCUG 64013 / CIP 107961 / Muc) protein is CinA-like protein.